Reading from the N-terminus, the 355-residue chain is Phosphoribosylformylglycinamidine cyclo-ligase (355 aa).

The protein belongs to the AIR synthase family.

Its subcellular location is the cytoplasm. It carries out the reaction 2-formamido-N(1)-(5-O-phospho-beta-D-ribosyl)acetamidine + ATP = 5-amino-1-(5-phospho-beta-D-ribosyl)imidazole + ADP + phosphate + H(+). The protein operates within purine metabolism; IMP biosynthesis via de novo pathway; 5-amino-1-(5-phospho-D-ribosyl)imidazole from N(2)-formyl-N(1)-(5-phospho-D-ribosyl)glycinamide: step 2/2. This is Phosphoribosylformylglycinamidine cyclo-ligase from Beijerinckia indica subsp. indica (strain ATCC 9039 / DSM 1715 / NCIMB 8712).